Consider the following 273-residue polypeptide: Giardin subunit beta (273 aa).

Residues 1–19 are nonhelical region; that stretch reads MSMFTSTRTLTQTMDKPDD. The interval 20-273 is rod; that stretch reads LTRSATETAV…GGLSMVTKHQ (254 aa). Coiled-coil stretches lie at residues 123–175 and 211–263; these read DTLN…YDQL and NTKL…SKIQ.

Belongs to the SF-assemblin family. Interacts with BOP1 (via C-terminal WD repeats).

The protein resides in the cytoplasm. Its subcellular location is the cytoskeleton. In terms of biological role, giardins are involved in parasite attachment to the intestinal mucosa and in the cytoskeletal disassembly and reassembly that marks the transition from infectious trophozoite to transmissible cyst. They may interact with other cytoskeletal proteins such as microtubules in the microribbons or crossbridges, to maintain the integrity of the ventral disk. The chain is Giardin subunit beta from Giardia intestinalis (Giardia lamblia).